The following is a 108-amino-acid chain: MITPAAYVGAAIAEIAGCFAFWAWLRLGKSVWWLVPGMASLALFAYLLTLVDSEAAGRAYAAYGGIYIMASLGWLWSVEGIEPDRWDLAGALICLIGAVVILIGPHEI.

4 helical membrane passes run 5–25, 31–51, 61–81, and 88–108; these read AAYV…WAWL, VWWL…LTLV, AAYG…VEGI, and LAGA…PHEI.

This sequence belongs to the UPF0060 family.

Its subcellular location is the cell inner membrane. The chain is UPF0060 membrane protein Nwi_1459 from Nitrobacter winogradskyi (strain ATCC 25391 / DSM 10237 / CIP 104748 / NCIMB 11846 / Nb-255).